A 2135-amino-acid polypeptide reads, in one-letter code: Nonribosomal peptide synthetase gliP (2135 aa).

Residues 34-424 (TYTELDVASS…LPADVEEPLR (391 aa)) form an adenylation 1 region. Residues 519–594 (TEREQVIAEC…GILPYARDLA (76 aa)) enclose the Carrier 1 domain. Residue Ser-555 is modified to O-(pantetheine 4'-phosphoryl)serine. The segment at 663-913 (AEHICNAWRQ…MATLPLVCRI (251 aa)) is condensation 1. An adenylation 2 region spans residues 1078–1458 (YRELDQKSNA…YQEEPRLTQA (381 aa)). The 79-residue stretch at 1544-1622 (ASIADGIATL…EQVELVRRKR (79 aa)) folds into the Carrier 2 domain. Residue Ser-1582 is modified to O-(pantetheine 4'-phosphoryl)serine. Positions 1642–1905 (SPLERQTWFQ…FLDRLPLRFK (264 aa)) are condensation 2. The 74-residue stretch at 2061–2134 (RRLVGILQRE…DLAQRLYRQV (74 aa)) folds into the Carrier 3 domain. Ser-2095 carries the O-(pantetheine 4'-phosphoryl)serine modification.

Belongs to the NRP synthetase family.

The protein operates within mycotoxin biosynthesis. Nonribosomal peptide synthetase; part of the gene cluster that mediates the biosynthesis of gliotoxin, a member of the epipolythiodioxopiperazine (ETP) class of toxins characterized by a disulfide-bridged cyclic dipeptide. The first step in gliotoxin biosynthesis is the condensation of serine and phenylalanine to form the cyclo-L-phenylalanyl-L-serine diketopiperazine (DKP) by the NRPS gliP. GliP is also able to produce the DKP cyclo-L-tryptophanyl-L-serine, suggesting that the substrate specificity of the first adenylation (A) domain in gliP is sufficiently relaxed to accommodate both L-Phe and L-Trp. The cytochrome P450 monooxygenase gliC has been shown to catalyze the subsequent hydroxylation of the alpha-carbon of L-Phe in cyclo-L-phenylalanyl-L-serine whereas the second cytochrome P450 enzyme, gliF, is presumably involved in the modification of the DKP side chain. The glutathione S-transferase (GST) gliG then forms a bis-glutathionylated biosynthetic intermediate which is responsible for the sulfurization of gliotoxin. This bis-glutathionylated intermediate is subsequently processed by the gamma-glutamyl cyclotransferase gliK to remove both gamma-glutamyl moieties. Subsequent processing via gliI yields a biosynthetic intermediate, which is N-methylated via the N-methyltransferase gliN, before the gliotoxin oxidoreductase gliT-mediated disulfide bridge closure. GliN-mediated amide methylation confers stability to ETP, damping the spontaneous formation of tri- and tetrasulfides. Intracellular dithiol gliotoxin oxidized by gliT is subsequently effluxed by gliA. Gliotoxin contributes to pathogenesis during invasive aspergillosis. In macrophages and neutrophils, gliotoxin showed inhibition of various different cell functions including cytokine production, antigen presentation, phagocytosis, and production of reactive oxygen species. This Aspergillus fumigatus (strain ATCC MYA-4609 / CBS 101355 / FGSC A1100 / Af293) (Neosartorya fumigata) protein is Nonribosomal peptide synthetase gliP.